Reading from the N-terminus, the 132-residue chain is Fluoride-specific ion channel FluC 1 (132 aa).

4 consecutive transmembrane segments (helical) span residues 11–31 (AVFA…ALAI), 37–57 (WPWP…YFTT), 70–92 (RPLL…VETI), and 105–125 (AYSV…TVLV). The Na(+) site is built by glycine 79 and threonine 82.

This sequence belongs to the fluoride channel Fluc/FEX (TC 1.A.43) family.

It localises to the cell membrane. The enzyme catalyses fluoride(in) = fluoride(out). Its activity is regulated as follows. Na(+) is not transported, but it plays an essential structural role and its presence is essential for fluoride channel function. Fluoride-specific ion channel. Important for reducing fluoride concentration in the cell, thus reducing its toxicity. This Mycobacterium bovis (strain ATCC BAA-935 / AF2122/97) protein is Fluoride-specific ion channel FluC 1.